The chain runs to 787 residues: DNA ligase (787 aa).

NAD(+) is bound by residues 32–36 (DVEYD), 81–82 (SL), and glutamate 121. Lysine 123 acts as the N6-AMP-lysine intermediate in catalysis. NAD(+)-binding residues include arginine 144, glutamate 181, lysine 297, and lysine 321. 4 residues coordinate Zn(2+): cysteine 415, cysteine 418, cysteine 445, and cysteine 451. The BRCT domain occupies 703–787 (VEGLPLAGQT…RLIELGVAVD (85 aa)).

The protein belongs to the NAD-dependent DNA ligase family. LigA subfamily. Mg(2+) is required as a cofactor. Requires Mn(2+) as cofactor.

It carries out the reaction NAD(+) + (deoxyribonucleotide)n-3'-hydroxyl + 5'-phospho-(deoxyribonucleotide)m = (deoxyribonucleotide)n+m + AMP + beta-nicotinamide D-nucleotide.. Its function is as follows. DNA ligase that catalyzes the formation of phosphodiester linkages between 5'-phosphoryl and 3'-hydroxyl groups in double-stranded DNA using NAD as a coenzyme and as the energy source for the reaction. It is essential for DNA replication and repair of damaged DNA. The protein is DNA ligase of Pseudomonas syringae pv. syringae (strain B728a).